Consider the following 105-residue polypeptide: Large ribosomal subunit protein bL21 (105 aa).

The protein belongs to the bacterial ribosomal protein bL21 family. Part of the 50S ribosomal subunit. Contacts protein L20.

Its function is as follows. This protein binds to 23S rRNA in the presence of protein L20. The protein is Large ribosomal subunit protein bL21 of Rickettsia typhi (strain ATCC VR-144 / Wilmington).